Here is a 171-residue protein sequence, read N- to C-terminus: Shikimate kinase (171 aa).

Glycine 14–threonine 19 contributes to the ATP binding site. A Mg(2+)-binding site is contributed by serine 18. 3 residues coordinate substrate: aspartate 36, arginine 60, and glycine 82. Residue arginine 120 participates in ATP binding. Substrate is bound at residue arginine 139. An ATP-binding site is contributed by glutamine 156.

The protein belongs to the shikimate kinase family. Monomer. The cofactor is Mg(2+).

It is found in the cytoplasm. The enzyme catalyses shikimate + ATP = 3-phosphoshikimate + ADP + H(+). Its pathway is metabolic intermediate biosynthesis; chorismate biosynthesis; chorismate from D-erythrose 4-phosphate and phosphoenolpyruvate: step 5/7. In terms of biological role, catalyzes the specific phosphorylation of the 3-hydroxyl group of shikimic acid using ATP as a cosubstrate. This chain is Shikimate kinase, found in Shewanella loihica (strain ATCC BAA-1088 / PV-4).